A 302-amino-acid polypeptide reads, in one-letter code: Pyridoxal 5'-phosphate synthase subunit PdxS (302 aa).

Asp-32 contacts D-ribose 5-phosphate. Residue Lys-89 is the Schiff-base intermediate with D-ribose 5-phosphate of the active site. Residue Gly-161 coordinates D-ribose 5-phosphate. Residue Arg-173 coordinates D-glyceraldehyde 3-phosphate. Residues Gly-222 and 243–244 contribute to the D-ribose 5-phosphate site; that span reads GS. The tract at residues 276-302 is disordered; it reads ASNPGKGMKGEANADLSEGEKLQTRGV. Basic and acidic residues predominate over residues 293-302; sequence EGEKLQTRGV.

Belongs to the PdxS/SNZ family. In the presence of PdxT, forms a dodecamer of heterodimers.

The catalysed reaction is aldehydo-D-ribose 5-phosphate + D-glyceraldehyde 3-phosphate + L-glutamine = pyridoxal 5'-phosphate + L-glutamate + phosphate + 3 H2O + H(+). Its pathway is cofactor biosynthesis; pyridoxal 5'-phosphate biosynthesis. Catalyzes the formation of pyridoxal 5'-phosphate from ribose 5-phosphate (RBP), glyceraldehyde 3-phosphate (G3P) and ammonia. The ammonia is provided by the PdxT subunit. Can also use ribulose 5-phosphate and dihydroxyacetone phosphate as substrates, resulting from enzyme-catalyzed isomerization of RBP and G3P, respectively. This Haloquadratum walsbyi (strain DSM 16790 / HBSQ001) protein is Pyridoxal 5'-phosphate synthase subunit PdxS.